Reading from the N-terminus, the 702-residue chain is Elongation factor G (702 aa).

The tr-type G domain maps to 8-196 (ERYRNIGISA…MKAIIWDEAS (189 aa)). GTP-binding positions include 17–24 (AHIDAGKT), 88–92 (DTPGH), and 142–145 (NKMD).

Belongs to the TRAFAC class translation factor GTPase superfamily. Classic translation factor GTPase family. EF-G/EF-2 subfamily.

Its subcellular location is the cytoplasm. Its function is as follows. Catalyzes the GTP-dependent ribosomal translocation step during translation elongation. During this step, the ribosome changes from the pre-translocational (PRE) to the post-translocational (POST) state as the newly formed A-site-bound peptidyl-tRNA and P-site-bound deacylated tRNA move to the P and E sites, respectively. Catalyzes the coordinated movement of the two tRNA molecules, the mRNA and conformational changes in the ribosome. The chain is Elongation factor G (fusA) from Thiomonas delicata (Thiomonas cuprina).